Reading from the N-terminus, the 416-residue chain is uncharacterized protein (416 aa).

Helical transmembrane passes span Leu-5–Leu-25, Ile-84–Val-104, Ala-128–Ile-148, Leu-160–Trp-180, Val-192–Phe-212, Pro-237–Leu-257, Phe-263–Leu-283, Leu-288–Thr-308, and Ile-312–Ile-332.

The protein belongs to the glycosyltransferase 83 family.

It is found in the cell membrane. This is an uncharacterized protein from Aquifex aeolicus (strain VF5).